The primary structure comprises 238 residues: MRPNNRELNQVRPVKITRHYTRYAEGSVLVEFGETKVLCNATVEETVPRFLKGQQQGWVTAEYGMLPRSTHSRMQREAAKGKQGGRTMEIQRLIARSLRAVVDLKALGERTVTVDCDVIQADGGTRTAAITGACVALHDAMSKLVADGVLKENPMKGLVAAISVGIVDGNAVCDLEYVEDSNAETDMNVVMVEDGRLVEVQGTAEGEPFSHMELLQLLDLAHQGINQLLDAQRKALAL.

Phosphate is bound by residues arginine 86 and 124–126; that span reads GTR.

This sequence belongs to the RNase PH family. In terms of assembly, homohexameric ring arranged as a trimer of dimers.

The enzyme catalyses tRNA(n+1) + phosphate = tRNA(n) + a ribonucleoside 5'-diphosphate. Its function is as follows. Phosphorolytic 3'-5' exoribonuclease that plays an important role in tRNA 3'-end maturation. Removes nucleotide residues following the 3'-CCA terminus of tRNAs; can also add nucleotides to the ends of RNA molecules by using nucleoside diphosphates as substrates, but this may not be physiologically important. Probably plays a role in initiation of 16S rRNA degradation (leading to ribosome degradation) during starvation. The protein is Ribonuclease PH of Actinobacillus pleuropneumoniae serotype 5b (strain L20).